A 1669-amino-acid chain; its full sequence is Collagen alpha-1(IV) chain (1669 aa).

The signal sequence occupies residues 1–27 (MGPRLSVWLLLLPAALLLHEEHSRAAA). A propeptide spans 28-172 (KGGCAGSGCG…LGHVPGMLLK (145 aa)) (N-terminal propeptide (7S domain)). 3 disordered regions span residues 48-459 (KGER…EIGE), 504-1382 (GRDG…PKGQ), and 1404-1431 (PGQK…DGLP). A glycan (N-linked (GlcNAc...) asparagine) is linked at asparagine 126. The triple-helical region stretch occupies residues 173–1440 (GERGFPGIPG…PGSMGPPGTP (1268 aa)). Residues 196–214 (VGPPGFTGPPGPPGPPGPP) are compositionally biased toward pro residues. 3 positions are modified to 3-hydroxyproline: proline 204, proline 207, and proline 210. Low complexity predominate over residues 234–249 (QGVSGPPGVPGQAQVQ). 2 stretches are compositionally biased toward basic and acidic residues: residues 250–263 (EKGD…KGQK) and 289–298 (PGKDGDKGEK). Pro residues-rich tracts occupy residues 367 to 376 (PGQPGPPGLP), 413 to 424 (PGPPGSPGPPGQ), and 436 to 448 (PGPP…PGIP). Basic and acidic residues predominate over residues 535–545 (FDLRLKGDKGD). Residues 586–595 (GPPGGVGFPG) show a composition bias toward gly residues. 3-hydroxyproline is present on residues proline 587 and proline 602. Proline 603 carries the 4-hydroxyproline modification. Position 605 is a 3-hydroxyproline (proline 605). Proline 606 carries the 4-hydroxyproline modification. A compositionally biased stretch (low complexity) spans 611–620 (AGPIGDKGQA). Residues 621–630 (GFPGGPGSPG) are compositionally biased toward gly residues. A 4-hydroxyproline mark is found at proline 623, proline 626, proline 629, and proline 632. Residue proline 647 is modified to 3-hydroxyproline. A compositionally biased stretch (gly residues) spans 797 to 817 (GVPGIGPPGARGPPGGQGPPG). 2 stretches are compositionally biased toward low complexity: residues 856–875 (QSGL…PGFP) and 977–986 (PGKDGQAGQP). A compositionally biased stretch (gly residues) spans 1011 to 1020 (GSVGGMGLPG). The segment covering 1086–1114 (SIGIPGMPGSPGLKGSPGSVGYPGSPGLP) has biased composition (low complexity). The residue at position 1214 (proline 1214) is a 3-hydroxyproline. Pro residues predominate over residues 1247–1258 (PGLPGPMGPPGL). Over residues 1290–1299 (GMPGIGGSPG) the composition is skewed to gly residues. Over residues 1368 to 1382 (PGLKGLQGLPGPKGQ) the composition is skewed to low complexity. Position 1424 is a 3-hydroxyproline (proline 1424). The Collagen IV NC1 domain occupies 1445-1669 (GFLVTRHSQT…SRCQVCMRRT (225 aa)). Cystine bridges form between cysteine 1460/cysteine 1551, cysteine 1493/cysteine 1548, cysteine 1505/cysteine 1511, cysteine 1570/cysteine 1665, cysteine 1604/cysteine 1662, and cysteine 1616/cysteine 1622. Residue methionine 1533 forms an S-Lysyl-methionine sulfilimine (Met-Lys) (interchain with K-1651) linkage. Lysine 1651 is covalently cross-linked (S-Lysyl-methionine sulfilimine (Lys-Met) (interchain with M-1533)).

Belongs to the type IV collagen family. In terms of assembly, there are six type IV collagen isoforms, alpha 1(IV)-alpha 6(IV), each of which can form a triple helix structure with 2 other chains to generate type IV collagen network. Interacts with EFEMP2. Lysines at the third position of the tripeptide repeating unit (G-X-Y) are hydroxylated. The modified lysines can be O-glycosylated. Post-translationally, contains 4-hydroxyproline. Prolines at the third position of the tripeptide repeating unit (G-X-Y) are hydroxylated in some or all of the chains. In terms of processing, contains 3-hydroxyproline. This modification occurs on the first proline residue in the sequence motif Gly-Pro-Hyp, where Hyp is 4-hydroxyproline. Type IV collagens contain numerous cysteine residues which are involved in inter- and intramolecular disulfide bonding. 12 of these, located in the NC1 domain, are conserved in all known type IV collagens. Post-translationally, the trimeric structure of the NC1 domains is stabilized by covalent bonds (sulfilimine cross-links) between Lys and Met residues. These cross-links are important for the mechanical stability of the basement membrane. Sulfilimine cross-link is catalyzed by PXDN. In terms of processing, proteolytic processing produces the C-terminal NC1 peptide, arresten. In terms of tissue distribution, highly expressed in placenta.

It localises to the secreted. The protein resides in the extracellular space. It is found in the extracellular matrix. The protein localises to the basement membrane. Functionally, type IV collagen is the major structural component of glomerular basement membranes (GBM), forming a 'chicken-wire' meshwork together with laminins, proteoglycans and entactin/nidogen. Its function is as follows. Arresten, comprising the C-terminal NC1 domain, inhibits angiogenesis and tumor formation. The C-terminal half is found to possess the anti-angiogenic activity. Specifically inhibits endothelial cell proliferation, migration and tube formation. The sequence is that of Collagen alpha-1(IV) chain from Homo sapiens (Human).